The sequence spans 335 residues: Methionine import ATP-binding protein MetN 2 (335 aa).

An ABC transporter domain is found at 2 to 242 (IEFHDVHKTY…PQHPTTRRFV (241 aa)). Position 38–45 (38–45 (GHSGAGKS)) interacts with ATP.

Belongs to the ABC transporter superfamily. Methionine importer (TC 3.A.1.24) family. As to quaternary structure, the complex is composed of two ATP-binding proteins (MetN), two transmembrane proteins (MetI) and a solute-binding protein (MetQ).

Its subcellular location is the cell inner membrane. The enzyme catalyses L-methionine(out) + ATP + H2O = L-methionine(in) + ADP + phosphate + H(+). It carries out the reaction D-methionine(out) + ATP + H2O = D-methionine(in) + ADP + phosphate + H(+). In terms of biological role, part of the ABC transporter complex MetNIQ involved in methionine import. Responsible for energy coupling to the transport system. The chain is Methionine import ATP-binding protein MetN 2 from Pseudomonas aeruginosa (strain UCBPP-PA14).